A 284-amino-acid polypeptide reads, in one-letter code: D-tagatose-1,6-bisphosphate aldolase subunit GatY (284 aa).

The Proton donor role is filled by aspartate 82. Histidine 83 and histidine 180 together coordinate Zn(2+). A dihydroxyacetone phosphate-binding site is contributed by glycine 181. Position 208 (histidine 208) interacts with Zn(2+). Residues 209–211 (GAS) and 230–233 (NVAT) each bind dihydroxyacetone phosphate.

It belongs to the class II fructose-bisphosphate aldolase family. TagBP aldolase GatY subfamily. As to quaternary structure, forms a complex with GatZ. Zn(2+) is required as a cofactor.

It catalyses the reaction D-tagatofuranose 1,6-bisphosphate = D-glyceraldehyde 3-phosphate + dihydroxyacetone phosphate. The protein operates within carbohydrate metabolism; D-tagatose 6-phosphate degradation; D-glyceraldehyde 3-phosphate and glycerone phosphate from D-tagatose 6-phosphate: step 2/2. In terms of biological role, catalytic subunit of the tagatose-1,6-bisphosphate aldolase GatYZ, which catalyzes the reversible aldol condensation of dihydroxyacetone phosphate (DHAP or glycerone-phosphate) with glyceraldehyde 3-phosphate (G3P) to produce tagatose 1,6-bisphosphate (TBP). Requires GatZ subunit for full activity and stability. Is involved in the catabolism of galactitol. This chain is D-tagatose-1,6-bisphosphate aldolase subunit GatY, found in Escherichia coli (strain SMS-3-5 / SECEC).